Here is a 125-residue protein sequence, read N- to C-terminus: Small ribosomal subunit protein uS13 (125 aa).

The disordered stretch occupies residues 90–125; it reads QRHRKGLPVRGQRTKTNARTRKGPKRTVAGKKKATK.

The protein belongs to the universal ribosomal protein uS13 family. Part of the 30S ribosomal subunit. Forms a loose heterodimer with protein S19. Forms two bridges to the 50S subunit in the 70S ribosome.

Located at the top of the head of the 30S subunit, it contacts several helices of the 16S rRNA. In the 70S ribosome it contacts the 23S rRNA (bridge B1a) and protein L5 of the 50S subunit (bridge B1b), connecting the 2 subunits; these bridges are implicated in subunit movement. Contacts the tRNAs in the A and P-sites. The protein is Small ribosomal subunit protein uS13 of Bifidobacterium adolescentis (strain ATCC 15703 / DSM 20083 / NCTC 11814 / E194a).